Reading from the N-terminus, the 369-residue chain is 3-methylarginine biosynthesis aminotransferase ArgM (369 aa).

An N6-(pyridoxal phosphate)lysine modification is found at Lys216.

Belongs to the class-I pyridoxal-phosphate-dependent aminotransferase family. Pyridoxal 5'-phosphate is required as a cofactor.

It catalyses the reaction L-arginine + 2-oxoglutarate = 5-guanidino-2-oxopentanoate + L-glutamate. The catalysed reaction is (3R)-5-guanidino-3-methyl-2-oxopentanoate + L-aspartate = (3R)-3-methyl-L-arginine + oxaloacetate. It functions in the pathway antibiotic biosynthesis. Functionally, aminotransferase involved in the formation of the rare amino acid 3-methylarginine (MeArg), which is incorporated into the peptidyl nucleoside antibiotic arginomycin. Catalyzes two rounds of transamination: the transfer of the amino group from L-arginine to 2-oxoglutarate to give glutamate and 5-guanidino-2-oxopentanoic acid, which will be methylated by ArgN. Then, ArgM specifically catalyzes transamination from the donor L-aspartate to the 5-guanidino-3-methyl-2-oxopentanoic acid produced by ArgN, generating the final product, 3-methylarginine. Cannot use arginine analogs, such as D-arginine, L-homoarginine and N-methylarginine for the first transamination. The polypeptide is 3-methylarginine biosynthesis aminotransferase ArgM (Streptomyces arginensis).